Here is a 273-residue protein sequence, read N- to C-terminus: Homeobox protein Nkx-2.2 (273 aa).

Disordered regions lie at residues 1–56 (MSLT…LDAV) and 90–131 (LAAG…KRKR). Over residues 20-38 (DTNDEEGSVAEGPEEENEG) the composition is skewed to acidic residues. The segment at residues 128–187 (KRKRRVLFSKAQTYELERRFRQQRYLSAPEREHLASLIRLTPTQVKIWFQNHRYKMKRAR) is a DNA-binding region (homeobox).

Belongs to the NK-2 homeobox family. As to quaternary structure, interacts with OLIG2.

It localises to the nucleus. Functionally, transcriptional activator involved in the development of insulin-producting beta cells in the endocrine pancreas. May also be involved in specifying diencephalic neuromeric boundaries, and in controlling the expression of genes that play a role in axonal guidance. Binds to elements within the NEUROD1 promoter. This Homo sapiens (Human) protein is Homeobox protein Nkx-2.2 (NKX2-2).